Here is a 557-residue protein sequence, read N- to C-terminus: MFCFQCEQTMRSETGAAGCGGPKGVCGKDEATADLQDVLIHQLKGIGQYVTRLQALGRRDAEADSFILYALFTTLTNVNFNRARFVEMIATAARLRDRLRDAYAEAASEAGQTPEALGGAAAFIPADSLVGLLAQANVASVRAGAEAVGEDVIGMRALLLYGLKGVAAYAHHAEVLGETREAIADGVARVLDLLAGDPVDLELMLEEALALGRVNFTVMEALDAANTGTYGAPTPTPVRITPVEGKAILVSGHDLRDLHAILEATKDTGINVYTHGEMLPAHGYPKLHAYSHLAGNYGTAWQNQQTEFAAFPGPIVMTSNCLIEPQPLYRNRIFTAGPVGWPGLRHIADGDFSPVVQAAKALPGFTRTEPERTVTTGFGREAVLGAAEQVIGAVKAGAIRHFFLIGGCDGAAPGRNYYTEFAEQAPDDTVVLTLGCGKYRFNTHEFGTIGGLPRMLDIGQCNDAYSALVIAQALAGAFECGVNDLPLSLVVSWFEQKAAAVFLTLLALGVRNVRLGPTLPGFLTPALLDILVNRFGVRPITSAEADIADALAPKAAA.

Positions 3, 6, 19, and 26 each coordinate [4Fe-4S] cluster. Hybrid [4Fe-2O-2S] cluster-binding residues include histidine 253, glutamate 277, cysteine 321, cysteine 408, cysteine 436, cysteine 461, glutamate 495, and lysine 497. Cysteine 408 is subject to Cysteine persulfide.

The protein belongs to the HCP family. Requires [4Fe-4S] cluster as cofactor. The cofactor is hybrid [4Fe-2O-2S] cluster.

The protein localises to the cytoplasm. It catalyses the reaction A + NH4(+) + H2O = hydroxylamine + AH2 + H(+). Functionally, catalyzes the reduction of hydroxylamine to form NH(3) and H(2)O. The polypeptide is Hydroxylamine reductase (Acidiphilium cryptum (strain JF-5)).